A 1175-amino-acid polypeptide reads, in one-letter code: Topoisomerase 1-associated factor 1 (1175 aa).

Disordered regions lie at residues 894–982 and 1043–1175; these read NYQS…DDEK and SDGD…DDEE. The segment covering 910–921 has biased composition (basic residues); the sequence is AKKRNSRKKSTK. Residues 930 to 940 show a composition bias toward acidic residues; the sequence is GDSDDDDDDAD. Positions 954 to 966 are enriched in basic and acidic residues; sequence PRDLLFEEPKPLR. Acidic residues predominate over residues 1044-1053; the sequence is DGDDDDDDGN. Residues 1078–1096 show a composition bias toward polar residues; sequence ILDSVQSQVLDNGSSQGNF. Positions 1137–1156 are enriched in acidic residues; that stretch reads EEDDNADEDEDEDEDVDGEE.

This sequence belongs to the timeless family. Component of the fork protection complex (FPC) consisting of TOF1 and CSM3.

The protein resides in the nucleus. Forms a fork protection complex (FPC) with CSM3 and which is required for chromosome segregation during meiosis and DNA damage repair. FPC coordinates leading and lagging strand synthesis and moves with the replication fork. FPC stabilizes replication forks in a configuration that is recognized by replication checkpoint sensors. This is Topoisomerase 1-associated factor 1 (TOF1) from Lodderomyces elongisporus (strain ATCC 11503 / CBS 2605 / JCM 1781 / NBRC 1676 / NRRL YB-4239) (Yeast).